Consider the following 217-residue polypeptide: MEAIAKYDFKATADDELSFKRGDILKVLNEECDQNWYKAELNGKDGFIPKNYIEMKPHPWFFGKIPRAKAEEMLSKQRHDGAFLIRESESAPGDFSLSVKFGNDVQHFKVLRDGAGKYFLWVVKFNSLNELVDYHRSTSVSRNQQIFLRDIEQVPQQPTYVQALFDFDPQEDGELGFRRGDFIHVMDNSDPNWWKGACHGQTGMFPRNYVTPVNRNV.

The residue at position 1 (Met-1) is an N-acetylmethionine. One can recognise an SH3 1 domain in the interval 1-58; the sequence is MEAIAKYDFKATADDELSFKRGDILKVLNEECDQNWYKAELNGKDGFIPKNYIEMKPH. Lys-6, Lys-50, and Lys-109 each carry N6-acetyllysine. In terms of domain architecture, SH2 spans 60–152; that stretch reads WFFGKIPRAK…NQQIFLRDIE (93 aa). A Glycyl lysine isopeptide (Lys-Gly) (interchain with G-Cter in ubiquitin) cross-link involves residue Lys-109. The region spanning 156–215 is the SH3 2 domain; that stretch reads QQPTYVQALFDFDPQEDGELGFRRGDFIHVMDNSDPNWWKGACHGQTGMFPRNYVTPVNR. Residue Tyr-209 is modified to Phosphotyrosine. At Thr-211 the chain carries Phosphothreonine.

This sequence belongs to the GRB2/sem-5/DRK family. In terms of assembly, homodimer. Associates (via SH2 domain) with activated EGF and PDGF receptors (tyrosine phosphorylated). Interacts with PDGFRA (tyrosine phosphorylated); the interaction may be indirect. Also associates to other cellular Tyr-phosphorylated proteins such as SIT1, IRS1, IRS2, IRS4, SHC and LNK; probably via the concerted action of both its SH2 and SH3 domains. It also seems to interact with RAS in the signaling pathway leading to DNA synthesis. Interacts with SOS1. Forms a complex with MUC1 and SOS1, through interaction of the SH3 domains with SOS1 and the SH2 domain with phosphorylated MUC1. Interacts with phosphorylated MET. Interacts with phosphorylated TOM1L1. Interacts with the phosphorylated C-terminus of SH2B2. Interacts with phosphorylated SIT1, LAX1, LAT, LAT2 and LIME1 upon TCR and/or BCR activation. Interacts with NISCH, PTPNS1 and REPS2. Interacts with syntrophin SNTA1. Interacts (via SH3 domains) with REPS1. Interacts (via SH3 domains) with PIK3C2B. Interacts with CBL and CBLB. Interacts with AJUBA and CLNK. Interacts (via SH2 domain) with TEK/TIE2 (tyrosine phosphorylated). Interacts with SHB, INPP5D/SHIP1, SKAP1 and SKAP2. Interacts with PTPN11. Interacts with PRNP. Interacts with RALGPS1. Interacts with HCST. Interacts with KDR. Interacts with FLT1 (tyrosine-phosphorylated). Interacts with GAPT and PTPRE. Interacts (via SH2 domain) with KIF26A. Interacts (via SH3 2) with GAB2. Interacts with ADAM15. Interacts with THEMIS2. Interacts (via SH2 domain) with AXL (phosphorylated). Interacts (via SH2 domain) with KIT (phosphorylated). Interacts with PTPRJ and BCR. Interacts with PTPN23. Interacts with FLT4 (tyrosine phosphorylated). Interacts with EPHB1 and SHC1; activates the MAPK/ERK cascade to regulate cell migration. Part of a complex including TNK2, GRB2, LTK and one receptor tyrosine kinase (RTK) such as AXL and PDGFRL, in which GRB2 promotes RTK recruitment by TNK2. Interacts (via SH2 domain) with CSF1R (tyrosine phosphorylated). Interacts with ERBB4. Interacts with NTRK1 (phosphorylated upon ligand-binding). Interacts with PTK2/FAK1 (tyrosine phosphorylated). Interacts with PTK2B/PYK2 (tyrosine phosphorylated). Interacts (via SH3 domains) with GAREM1 isoform 1 (via proline-rich domain and tyrosine phosphorylated); the interaction occurs upon EGF stimulation. Interacts with DAB2. Interacts with TESPA1. Interacts with PLCG1, LAT and THEMIS upon TCR activation in thymocytes; the association is weaker in the absence of TESPA1. Interacts with CD28. Interacts with RAB13; may recruit RAB13 to the leading edge of migrating endothelial cells where it can activate RHOA. Interacts with ASAP3 (phosphorylated form). Interacts (via SH2 domain) with PTPRH (phosphorylated form). Interacts with PTPRO (phosphorylated form). Interacts with PTPRB (phosphorylated form). Interacts (via SH3 domain 2) with PRR14 (via proline-rich region). Interacts with FCRL6 (tyrosine phosphorylated form). Interacts with RHEX (via tyrosine-phosphorylated form). Interacts with DENND2B. Interacts with SPRY2. Interacts with LRRC8A. Interacts with PEAK1. Interacts with CD28. Interacts with FCRL1. Interacts with PCNA. Interacts with CD19. Interacts with BECN1. Interacts with RAD51; the interaction inhibits RAD51 ATPase to stabilize RAD51-DNA complex at stalled replication forks. Interacts with MRE11; this interaction recruits MRE11 to the DNA damage sites. Interacts with RIPK1 ans SQSTM1; these interactions play a critical role in regulating programmed necrosis. Interacts with AGO2; this interaction is important for the formation of a ternary complex containing GRB2, AGO2 and DICER1. Interacts with TIGIT; this interaction inhibits PI3K and MAPK signaling cascades. Interacts with CD226; this interaction leads to activation of VAV1, PI3K and PLCG1. As to quaternary structure, interacts (via SH2-domain) with SCIMP; this interaction is dependent on phosphorylation of SCIMP 'Tyr-69'. Interacts with SOS1; this interaction competes with GRB2 to bind SOS1 via its N-terminal SH3 domain. In terms of assembly, (Microbial infection) Interacts (via SH3 domain) with hepatitis E virus/HEV ORF3 protein. As to quaternary structure, (Microbial infection) Interacts with hepatitis C virus/HCV protein NS5A via its SH3 domains. (Microbial infection) Interacts with herpes simplex virus 1 protein UL46. In terms of assembly, (Microbial infection) Interacts with B19 parvovirus protein 11K. Phosphorylation of Tyr-209 in the C-terminal SH3 domain reduces its binding to SOS1. Post-translationally, ubiquitinated by RNF173, leading to proteasomal degradation and inhibition of the RAF/MEK/ERK pathway. In the nucleus, polyubiquitinated by RBBP6 at Lys-109 at DNA damage sites.

It localises to the nucleus. The protein resides in the cytoplasm. Its subcellular location is the endosome. The protein localises to the golgi apparatus. Functionally, non-enzymatic adapter protein that plays a pivotal role in precisely regulated signaling cascades from cell surface receptors to cellular responses, including signaling transduction and gene expression. Thus, participates in many biological processes including regulation of innate and adaptive immunity, autophagy, DNA repair or necroptosis. Controls signaling complexes at the T-cell antigen receptor to facilitate the activation, differentiation, and function of T-cells. Mechanistically, engagement of the TCR leads to phosphorylation of the adapter protein LAT, which serves as docking site for GRB2. In turn, GRB2 establishes a a connection with SOS1 that acts as a guanine nucleotide exchange factor and serves as a critical regulator of KRAS/RAF1 leading to MAPKs translocation to the nucleus and activation. Functions also a role in B-cell activation by amplifying Ca(2+) mobilization and activation of the ERK MAP kinase pathway upon recruitment to the phosphorylated B-cell antigen receptor (BCR). Plays a role in switching between autophagy and programmed necrosis upstream of EGFR by interacting with components of necrosomes including RIPK1 and with autophagy regulators SQSTM1 and BECN1. Regulates miRNA biogenesis by forming a functional ternary complex with AGO2 and DICER1. Functions in the replication stress response by protecting DNA at stalled replication forks from MRE11-mediated degradation. Mechanistically, inhibits RAD51 ATPase activity to stabilize RAD51 on stalled replication forks. Additionally, directly recruits and later releases MRE11 at DNA damage sites during the homology-directed repair (HDR) process. Its function is as follows. Does not bind to phosphorylated epidermal growth factor receptor (EGFR) but inhibits EGF-induced transactivation of a RAS-responsive element. Acts as a dominant negative protein over GRB2 and by suppressing proliferative signals, may trigger active programmed cell death. Mechanistically, inhibits RAS-ERK signaling and downstream cell proliferation by competing with GRB2 for SOS1 binding and thus by regulating SOS1 membrane recruitment. This Homo sapiens (Human) protein is Growth factor receptor-bound protein 2 (GRB2).